Here is a 690-residue protein sequence, read N- to C-terminus: Polyphosphate kinase (690 aa).

Asn-45 is a binding site for ATP. Positions 375 and 405 each coordinate Mg(2+). His-435 (phosphohistidine intermediate) is an active-site residue. Tyr-468, Arg-564, and His-592 together coordinate ATP.

The protein belongs to the polyphosphate kinase 1 (PPK1) family. Mg(2+) is required as a cofactor. Post-translationally, an intermediate of this reaction is the autophosphorylated ppk in which a phosphate is covalently linked to a histidine residue through a N-P bond.

The catalysed reaction is [phosphate](n) + ATP = [phosphate](n+1) + ADP. Functionally, catalyzes the reversible transfer of the terminal phosphate of ATP to form a long-chain polyphosphate (polyP). The polypeptide is Polyphosphate kinase (Pseudomonas aeruginosa (strain ATCC 15692 / DSM 22644 / CIP 104116 / JCM 14847 / LMG 12228 / 1C / PRS 101 / PAO1)).